The primary structure comprises 239 residues: Phosphoribosylaminoimidazole-succinocarboxamide synthase (239 aa).

Belongs to the SAICAR synthetase family.

The enzyme catalyses 5-amino-1-(5-phospho-D-ribosyl)imidazole-4-carboxylate + L-aspartate + ATP = (2S)-2-[5-amino-1-(5-phospho-beta-D-ribosyl)imidazole-4-carboxamido]succinate + ADP + phosphate + 2 H(+). It functions in the pathway purine metabolism; IMP biosynthesis via de novo pathway; 5-amino-1-(5-phospho-D-ribosyl)imidazole-4-carboxamide from 5-amino-1-(5-phospho-D-ribosyl)imidazole-4-carboxylate: step 1/2. The polypeptide is Phosphoribosylaminoimidazole-succinocarboxamide synthase (Bacillus thuringiensis subsp. konkukian (strain 97-27)).